The sequence spans 317 residues: Glycine--tRNA ligase alpha subunit (317 aa).

This sequence belongs to the class-II aminoacyl-tRNA synthetase family. As to quaternary structure, tetramer of two alpha and two beta subunits.

Its subcellular location is the cytoplasm. It carries out the reaction tRNA(Gly) + glycine + ATP = glycyl-tRNA(Gly) + AMP + diphosphate. This Pseudomonas fluorescens (strain SBW25) protein is Glycine--tRNA ligase alpha subunit.